Reading from the N-terminus, the 249-residue chain is 5'-nucleotidase SurE (249 aa).

A divalent metal cation contacts are provided by Asp-9, Asp-10, Ser-40, and Asn-92.

The protein belongs to the SurE nucleotidase family. A divalent metal cation is required as a cofactor.

It localises to the cytoplasm. The enzyme catalyses a ribonucleoside 5'-phosphate + H2O = a ribonucleoside + phosphate. Nucleotidase that shows phosphatase activity on nucleoside 5'-monophosphates. This chain is 5'-nucleotidase SurE, found in Shewanella baltica (strain OS223).